Here is a 265-residue protein sequence, read N- to C-terminus: S-acyl fatty acid synthase thioesterase, medium chain (265 aa).

Residue Met-1 is modified to N-acetylmethionine. Active-site residues include Ser-101 and His-237.

The protein belongs to the thioesterase family. In terms of assembly, interacts (via C-terminus) with FASN. Detected both in lactating and non-lactating breast epithelium (at protein level). Isoform 2 is up-regulated in bone marrow-derived mononuclear cells of rheumatoid arthritis patients.

The protein localises to the cytoplasm. It localises to the cytosol. The enzyme catalyses (9Z)-octadecenoyl-[ACP] + H2O = (9Z)-octadecenoate + holo-[ACP] + H(+). It carries out the reaction decanoyl-CoA + H2O = decanoate + CoA + H(+). It catalyses the reaction dodecanoyl-CoA + H2O = dodecanoate + CoA + H(+). The catalysed reaction is tetradecanoyl-CoA + H2O = tetradecanoate + CoA + H(+). The enzyme catalyses hexadecanoyl-CoA + H2O = hexadecanoate + CoA + H(+). In terms of biological role, contributes to the release of free fatty acids from fatty acid synthase (FASN). Has broad substrate specificity, giving rise to a range of free fatty acids with chain lengths between 10 and 16 carbon atoms (C10 - C16). The polypeptide is S-acyl fatty acid synthase thioesterase, medium chain (Homo sapiens (Human)).